Consider the following 306-residue polypeptide: uncharacterized protein (306 aa).

Residue Asn-208 is glycosylated (N-linked (GlcNAc...) asparagine). Transmembrane regions (helical) follow at residues 218–238 and 284–304; these read VFEIILSCPNTCPFLLLVLFY and VMLVGGIASIVAAVVVYKITK.

It is found in the membrane. This is an uncharacterized protein from Encephalitozoon cuniculi (strain GB-M1) (Microsporidian parasite).